A 156-amino-acid polypeptide reads, in one-letter code: 6,7-dimethyl-8-ribityllumazine synthase (156 aa).

5-amino-6-(D-ribitylamino)uracil is bound by residues phenylalanine 23, 57 to 59 (AFE), and 81 to 83 (AVI). 86 to 87 (ST) lines the (2S)-2-hydroxy-3-oxobutyl phosphate pocket. The Proton donor role is filled by histidine 89. Phenylalanine 114 serves as a coordination point for 5-amino-6-(D-ribitylamino)uracil. Position 128 (arginine 128) interacts with (2S)-2-hydroxy-3-oxobutyl phosphate.

Belongs to the DMRL synthase family.

It catalyses the reaction (2S)-2-hydroxy-3-oxobutyl phosphate + 5-amino-6-(D-ribitylamino)uracil = 6,7-dimethyl-8-(1-D-ribityl)lumazine + phosphate + 2 H2O + H(+). The protein operates within cofactor biosynthesis; riboflavin biosynthesis; riboflavin from 2-hydroxy-3-oxobutyl phosphate and 5-amino-6-(D-ribitylamino)uracil: step 1/2. Its function is as follows. Catalyzes the formation of 6,7-dimethyl-8-ribityllumazine by condensation of 5-amino-6-(D-ribitylamino)uracil with 3,4-dihydroxy-2-butanone 4-phosphate. This is the penultimate step in the biosynthesis of riboflavin. The protein is 6,7-dimethyl-8-ribityllumazine synthase of Sulfurospirillum multivorans (Dehalospirillum multivorans).